Consider the following 671-residue polypeptide: UvrABC system protein B (671 aa).

The 158-residue stretch at E26–R183 folds into the Helicase ATP-binding domain. G39–T46 serves as a coordination point for ATP. Residues Y92–V115 carry the Beta-hairpin motif. Residues Q431 to L597 enclose the Helicase C-terminal domain. One can recognise a UVR domain in the interval D631 to Q666.

It belongs to the UvrB family. In terms of assembly, forms a heterotetramer with UvrA during the search for lesions. Interacts with UvrC in an incision complex.

The protein localises to the cytoplasm. In terms of biological role, the UvrABC repair system catalyzes the recognition and processing of DNA lesions. A damage recognition complex composed of 2 UvrA and 2 UvrB subunits scans DNA for abnormalities. Upon binding of the UvrA(2)B(2) complex to a putative damaged site, the DNA wraps around one UvrB monomer. DNA wrap is dependent on ATP binding by UvrB and probably causes local melting of the DNA helix, facilitating insertion of UvrB beta-hairpin between the DNA strands. Then UvrB probes one DNA strand for the presence of a lesion. If a lesion is found the UvrA subunits dissociate and the UvrB-DNA preincision complex is formed. This complex is subsequently bound by UvrC and the second UvrB is released. If no lesion is found, the DNA wraps around the other UvrB subunit that will check the other stand for damage. This chain is UvrABC system protein B, found in Yersinia pseudotuberculosis serotype IB (strain PB1/+).